The following is a 97-amino-acid chain: UPF0729 protein GD16342 (97 aa).

The interval 64–97 (KPEKASVGPAEESQNPPLNAIAAETEVDESKKEI) is disordered. The residue at position 69 (Ser-69) is a Phosphoserine.

Belongs to the UPF0729 family.

The protein is UPF0729 protein GD16342 of Drosophila simulans (Fruit fly).